Consider the following 343-residue polypeptide: Heat-inducible transcription repressor HrcA (343 aa).

It belongs to the HrcA family.

Functionally, negative regulator of class I heat shock genes (grpE-dnaK-dnaJ and groELS operons). Prevents heat-shock induction of these operons. This is Heat-inducible transcription repressor HrcA from Mycolicibacterium paratuberculosis (strain ATCC BAA-968 / K-10) (Mycobacterium paratuberculosis).